Here is a 204-residue protein sequence, read N- to C-terminus: MPYPFKLPDLGYPYEALEPHIDAKTMEIHHQKHHGAYVTNLNAALEKYPYLHGVEVEVLLRHLAALPQDIQTAVRNNGGGHLNHSLFWRLLTPGGAKEPVGELKKAIDEQFGGFQALKEKLTQAAMGRFGSGWAWLVKDPFGKLHVLSTPNQDNPVMEGFTPIVGIDVWEHAYYLKYQNRRADYLQAIWNVLNWDVAEEFFKKA.

Mn(2+) contacts are provided by His29, His84, Asp167, and His171.

It belongs to the iron/manganese superoxide dismutase family. As to quaternary structure, homotetramer. The cofactor is Mn(2+).

It carries out the reaction 2 superoxide + 2 H(+) = H2O2 + O2. Its function is as follows. Destroys superoxide anion radicals which are normally produced within the cells and which are toxic to biological systems. In Thermus thermophilus (strain ATCC BAA-163 / DSM 7039 / HB27), this protein is Superoxide dismutase [Mn] (sodA).